The chain runs to 296 residues: Stanniocalcin-2 (296 aa).

The signal sequence occupies residues 1–24; sequence MCAERLGQFVTLALVFATLDPARG. A disordered region spans residues 22–44; sequence ARGTDSTNPPEGPQDRGSQQKGR. Asn73 carries an N-linked (GlcNAc...) asparagine glycan. Residues 236 to 296 form a disordered region; sequence RPYHRDTDHH…EQSEYSDIRR (61 aa). A compositionally biased stretch (basic and acidic residues) spans 238–258; it reads YHRDTDHHLTANRGAKGERGS.

It belongs to the stanniocalcin family. Homodimer; disulfide-linked. In terms of tissue distribution, expressed in a variety of tissues. Strongly expressed in ovary and to a lesser extent in kidney.

The protein resides in the secreted. Has an anti-hypocalcemic action on calcium and phosphate homeostasis. The chain is Stanniocalcin-2 (Stc2) from Rattus norvegicus (Rat).